A 120-amino-acid chain; its full sequence is Large ribosomal subunit protein bL19 (120 aa).

The protein belongs to the bacterial ribosomal protein bL19 family.

In terms of biological role, this protein is located at the 30S-50S ribosomal subunit interface and may play a role in the structure and function of the aminoacyl-tRNA binding site. This Cyanothece sp. (strain PCC 7425 / ATCC 29141) protein is Large ribosomal subunit protein bL19.